The chain runs to 250 residues: 2,3-bisphosphoglycerate-dependent phosphoglycerate mutase (250 aa).

Substrate is bound by residues 8-15 (RHGESKWN), 21-22 (TG), arginine 60, 87-90 (ERHY), lysine 98, 114-115 (RR), and 183-184 (GN). Histidine 9 functions as the Tele-phosphohistidine intermediate in the catalytic mechanism. The active-site Proton donor/acceptor is glutamate 87.

Belongs to the phosphoglycerate mutase family. BPG-dependent PGAM subfamily.

The catalysed reaction is (2R)-2-phosphoglycerate = (2R)-3-phosphoglycerate. It functions in the pathway carbohydrate degradation; glycolysis; pyruvate from D-glyceraldehyde 3-phosphate: step 3/5. Its function is as follows. Catalyzes the interconversion of 2-phosphoglycerate and 3-phosphoglycerate. In Borrelia recurrentis (strain A1), this protein is 2,3-bisphosphoglycerate-dependent phosphoglycerate mutase.